A 502-amino-acid polypeptide reads, in one-letter code: Probable cytosol aminopeptidase (502 aa).

Lys-269 and Asp-274 together coordinate Mn(2+). Lys-281 is a catalytic residue. 3 residues coordinate Mn(2+): Asp-292, Asp-351, and Glu-353. Arg-355 is an active-site residue.

It belongs to the peptidase M17 family. Requires Mn(2+) as cofactor.

The protein resides in the cytoplasm. It catalyses the reaction Release of an N-terminal amino acid, Xaa-|-Yaa-, in which Xaa is preferably Leu, but may be other amino acids including Pro although not Arg or Lys, and Yaa may be Pro. Amino acid amides and methyl esters are also readily hydrolyzed, but rates on arylamides are exceedingly low.. The catalysed reaction is Release of an N-terminal amino acid, preferentially leucine, but not glutamic or aspartic acids.. Presumably involved in the processing and regular turnover of intracellular proteins. Catalyzes the removal of unsubstituted N-terminal amino acids from various peptides. The chain is Probable cytosol aminopeptidase from Aliivibrio fischeri (strain MJ11) (Vibrio fischeri).